The primary structure comprises 359 residues: 3-dehydroquinate synthase (359 aa).

Residues 71–76, 105–109, 129–130, Lys142, Lys151, and 169–172 contribute to the NAD(+) site; these read DGEAHK, GVIGD, TT, and TLHT. Glu184, His247, and His264 together coordinate Zn(2+).

Belongs to the sugar phosphate cyclases superfamily. Dehydroquinate synthase family. Co(2+) serves as cofactor. The cofactor is Zn(2+). It depends on NAD(+) as a cofactor.

It is found in the cytoplasm. The enzyme catalyses 7-phospho-2-dehydro-3-deoxy-D-arabino-heptonate = 3-dehydroquinate + phosphate. Its pathway is metabolic intermediate biosynthesis; chorismate biosynthesis; chorismate from D-erythrose 4-phosphate and phosphoenolpyruvate: step 2/7. Functionally, catalyzes the conversion of 3-deoxy-D-arabino-heptulosonate 7-phosphate (DAHP) to dehydroquinate (DHQ). This is 3-dehydroquinate synthase from Neisseria gonorrhoeae (strain ATCC 700825 / FA 1090).